A 73-amino-acid polypeptide reads, in one-letter code: Large ribosomal subunit protein bL31 (73 aa).

Residues 34 to 43 are compositionally biased toward basic and acidic residues; it reads KMNLDIDPKS. Positions 34–54 are disordered; the sequence is KMNLDIDPKSHPAWTGGTQQM.

Belongs to the bacterial ribosomal protein bL31 family. Type A subfamily. In terms of assembly, part of the 50S ribosomal subunit.

In terms of biological role, binds the 23S rRNA. This is Large ribosomal subunit protein bL31 from Rhodopseudomonas palustris (strain BisA53).